Reading from the N-terminus, the 239-residue chain is 1-(5-phosphoribosyl)-5-[(5-phosphoribosylamino)methylideneamino] imidazole-4-carboxamide isomerase (239 aa).

D9 acts as the Proton acceptor in catalysis. The active-site Proton donor is D131.

It belongs to the HisA/HisF family.

The protein resides in the cytoplasm. It carries out the reaction 1-(5-phospho-beta-D-ribosyl)-5-[(5-phospho-beta-D-ribosylamino)methylideneamino]imidazole-4-carboxamide = 5-[(5-phospho-1-deoxy-D-ribulos-1-ylimino)methylamino]-1-(5-phospho-beta-D-ribosyl)imidazole-4-carboxamide. It participates in amino-acid biosynthesis; L-histidine biosynthesis; L-histidine from 5-phospho-alpha-D-ribose 1-diphosphate: step 4/9. The protein is 1-(5-phosphoribosyl)-5-[(5-phosphoribosylamino)methylideneamino] imidazole-4-carboxamide isomerase of Phocaeicola vulgatus (strain ATCC 8482 / DSM 1447 / JCM 5826 / CCUG 4940 / NBRC 14291 / NCTC 11154) (Bacteroides vulgatus).